Consider the following 137-residue polypeptide: CUB domain-containing protein (137 aa).

An N-terminal signal peptide occupies residues 1–21; that stretch reads MRLSRAFAWPLLCSIATTVKA. Cystine bridges form between Cys30–Cys51 and Cys75–Cys96. The region spanning 30–132 is the CUB domain; it reads CGGHYTDEYG…TFFEIYYFVD (103 aa).

This is CUB domain-containing protein from Homo sapiens (Human).